Consider the following 314-residue polypeptide: uncharacterized protein (314 aa).

The tract at residues 1 to 70 (MAGNSQRRGA…QGRHKKTDDT (70 aa)) is disordered. Basic residues predominate over residues 44 to 65 (RPHHPAGKRAAKAARQAQGRHK). S-adenosyl-L-methionine is bound by residues G265, I285, and L294.

This sequence belongs to the class IV-like SAM-binding methyltransferase superfamily. RNA methyltransferase TrmH family.

This is an uncharacterized protein from Mycolicibacterium gilvum (strain PYR-GCK) (Mycobacterium gilvum (strain PYR-GCK)).